The chain runs to 203 residues: Recombination protein RecR (203 aa).

Residues 56–71 (CEVCGNVSDADRCRIC) form a C4-type zinc finger. In terms of domain architecture, Toprim spans 79 to 179 (SLVCVVEEPK…TVTRIASGLP (101 aa)).

This sequence belongs to the RecR family.

Functionally, may play a role in DNA repair. It seems to be involved in an RecBC-independent recombinational process of DNA repair. It may act with RecF and RecO. This chain is Recombination protein RecR, found in Mycobacterium sp. (strain JLS).